Here is an 84-residue protein sequence, read N- to C-terminus: Large ribosomal subunit protein bL27 (84 aa).

The tract at residues 1–21 (MAHKKGGGSTKNGRDSNPKYL) is disordered.

The protein belongs to the bacterial ribosomal protein bL27 family.

The protein is Large ribosomal subunit protein bL27 of Chlorobium phaeovibrioides (strain DSM 265 / 1930) (Prosthecochloris vibrioformis (strain DSM 265)).